Consider the following 385-residue polypeptide: Ribosomal RNA large subunit methyltransferase G (385 aa).

This sequence belongs to the methyltransferase superfamily. RlmG family.

The protein localises to the cytoplasm. It catalyses the reaction guanosine(1835) in 23S rRNA + S-adenosyl-L-methionine = N(2)-methylguanosine(1835) in 23S rRNA + S-adenosyl-L-homocysteine + H(+). In terms of biological role, specifically methylates the guanine in position 1835 (m2G1835) of 23S rRNA. The chain is Ribosomal RNA large subunit methyltransferase G from Vibrio parahaemolyticus serotype O3:K6 (strain RIMD 2210633).